The following is a 298-amino-acid chain: MQKNQTIFLNTWKFLITLHQKPWSTFFTKIPDFPHVLLKDIAKVGVGLVSGFDEAFLLNEDDISKLNEDEKQLIKNFVKAKNCKRFVVEGFVQYILIEDNLKDEEIFKTKYPNIYKKLLKFKDRMENRYLPKNKKWFNWQALRNYKFLIKNLNKKRIYVPTLDRKPYNRFSLGDDELLPSGDVIFIQPYNDDDIYFLLGYLNSSFFRNYYLANGGRRGGRVAFTQKLLENAKIPTFSDEVKEKIKNIVKDIIYNLKNGKDIENLERQIDYIIVSAINNNQFKGYQTTLKNLLKPKLKG.

It carries out the reaction a 2'-deoxyadenosine in DNA + S-adenosyl-L-methionine = an N(6)-methyl-2'-deoxyadenosine in DNA + S-adenosyl-L-homocysteine + H(+). A methylase that recognizes the double-stranded sequence 5'-GTNNAC-3', methylates A-5 on both strands, and protects the DNA from cleavage by the MjaIV endonuclease. In Methanocaldococcus jannaschii (strain ATCC 43067 / DSM 2661 / JAL-1 / JCM 10045 / NBRC 100440) (Methanococcus jannaschii), this protein is Type II methyltransferase M.MjaIV (mjaIVMP).